The sequence spans 400 residues: Acyl-CoA dehydrogenase FadE26 (400 aa).

FAD-binding positions include 127–130, threonine 136, and serine 162; that span reads IGYS. Residue glutamate 247 is the Proton acceptor of the active site. 380 to 382 contributes to the FAD binding site; sequence TNE.

It belongs to the acyl-CoA dehydrogenase family. Heterotetramer (dimer of heterodimers) composed of FadE26 and FadE27. Requires FAD as cofactor.

The enzyme catalyses (25S)-3-oxocholest-4-en-26-oyl-CoA + A = 3-oxo-cholest-4,24-dien-26-oyl-CoA + AH2. It functions in the pathway steroid metabolism; cholesterol degradation. Its activity is regulated as follows. Uncompetitively inhibited by high concentration of 3-OCS-CoA. Its function is as follows. Involved in the first cycle of side chain dehydrogenation in the beta-oxidation of cholesterol catabolism. It contributes partly to the virulence by increasing the efficiency of beta-oxidation. Catalyzes the dehydrogenation of acyl-CoA ester side chains of (25S)-3-oxo-cholest-4-en-26-oyl-CoA (3-OCS-CoA) to yield (24E)-3-oxo-cholest-4,24-dien-26-oyl-CoA. Also able to dehydrogenate steroyl-CoA such as 3-oxo-chol-4-en-24-oyl-CoA (3-OCO-CoA) as well as 3-oxo-4-pregnene-20-carboxyl-CoA (3-OPC-CoA). It dehydrogenates only (25S)-OCS-CoA diastereomer. The protein is Acyl-CoA dehydrogenase FadE26 (fadE26) of Mycobacterium tuberculosis (strain ATCC 25618 / H37Rv).